The primary structure comprises 78 residues: uncharacterized protein (78 aa).

This is an uncharacterized protein from Schizosaccharomyces pombe (strain 972 / ATCC 24843) (Fission yeast).